The chain runs to 380 residues: Cytochrome b (380 aa).

The next 4 helical transmembrane spans lie at 34–54 (FGSL…FLAM), 78–99 (WLLR…YMHI), 114–134 (WNIG…GYVL), and 179–199 (FFAF…VHLL). Residues His84 and His98 each contribute to the heme b site. Heme b contacts are provided by His183 and His197. His202 provides a ligand contact to a ubiquinone. Helical transmembrane passes span 227–247 (YKDV…ALFS), 289–309 (LGGV…PFVH), 321–341 (LAQV…WLGG), and 348–368 (YIFL…LLIP).

The protein belongs to the cytochrome b family. As to quaternary structure, the cytochrome bc1 complex contains 3 respiratory subunits (MT-CYB, CYC1 and UQCRFS1), 2 core proteins (UQCRC1 and UQCRC2) and probably 6 low-molecular weight proteins. Heme b serves as cofactor.

The protein localises to the mitochondrion inner membrane. Functionally, component of the ubiquinol-cytochrome c reductase complex (complex III or cytochrome b-c1 complex) that is part of the mitochondrial respiratory chain. The b-c1 complex mediates electron transfer from ubiquinol to cytochrome c. Contributes to the generation of a proton gradient across the mitochondrial membrane that is then used for ATP synthesis. This chain is Cytochrome b (MT-CYB), found in Branchiostoma floridae (Florida lancelet).